The following is a 300-amino-acid chain: Diaminopimelate epimerase (300 aa).

Substrate contacts are provided by Asn-15, Gln-47, and Asn-67. Cys-76 serves as the catalytic Proton donor. Substrate-binding positions include 77–78 (GN), Asn-163, Asn-197, and 215–216 (ER). The Proton acceptor role is filled by Cys-224. 225-226 (GS) contacts substrate. A disordered region spans residues 275–300 (SGTFDPATGEWSRDAQNDKPTDRGAA). Positions 285 to 300 (WSRDAQNDKPTDRGAA) are enriched in basic and acidic residues.

Belongs to the diaminopimelate epimerase family. Homodimer.

The protein resides in the cytoplasm. It catalyses the reaction (2S,6S)-2,6-diaminopimelate = meso-2,6-diaminopimelate. The protein operates within amino-acid biosynthesis; L-lysine biosynthesis via DAP pathway; DL-2,6-diaminopimelate from LL-2,6-diaminopimelate: step 1/1. Functionally, catalyzes the stereoinversion of LL-2,6-diaminopimelate (L,L-DAP) to meso-diaminopimelate (meso-DAP), a precursor of L-lysine and an essential component of the bacterial peptidoglycan. The protein is Diaminopimelate epimerase of Brucella anthropi (strain ATCC 49188 / DSM 6882 / CCUG 24695 / JCM 21032 / LMG 3331 / NBRC 15819 / NCTC 12168 / Alc 37) (Ochrobactrum anthropi).